The following is a 467-amino-acid chain: Asparagine--tRNA ligase (467 aa).

It belongs to the class-II aminoacyl-tRNA synthetase family. Homodimer.

The protein resides in the cytoplasm. The catalysed reaction is tRNA(Asn) + L-asparagine + ATP = L-asparaginyl-tRNA(Asn) + AMP + diphosphate + H(+). The polypeptide is Asparagine--tRNA ligase (Actinobacillus pleuropneumoniae serotype 3 (strain JL03)).